The primary structure comprises 233 residues: MKSAVLVFPGINRERDMARALKLVSGNDAAMVWHAETELPKGTDLVVVPGGFSYGDYLRCGAIAARAPVMDAVRKFAADGGLVLGVCNGFQILCESGLLPGVLMRNARLKFICRDVHLRVERNDTPFTQGYKAGQVIKVPVAHGEGNYEADEDTVKRLEGDGRVLYRYCSPEGEVGESHNINGAAASIAGIVSERGNVLGMMPHPENHVEDIMGCTDGRGLFAGLAQHLAKAA.

Residues 3–233 (SAVLVFPGIN…GLAQHLAKAA (231 aa)) enclose the Glutamine amidotransferase type-1 domain. Cys-87 serves as the catalytic Nucleophile. Residues His-204 and Glu-206 contribute to the active site.

As to quaternary structure, part of the FGAM synthase complex composed of 1 PurL, 1 PurQ and 2 PurS subunits.

Its subcellular location is the cytoplasm. It catalyses the reaction N(2)-formyl-N(1)-(5-phospho-beta-D-ribosyl)glycinamide + L-glutamine + ATP + H2O = 2-formamido-N(1)-(5-O-phospho-beta-D-ribosyl)acetamidine + L-glutamate + ADP + phosphate + H(+). The catalysed reaction is L-glutamine + H2O = L-glutamate + NH4(+). It participates in purine metabolism; IMP biosynthesis via de novo pathway; 5-amino-1-(5-phospho-D-ribosyl)imidazole from N(2)-formyl-N(1)-(5-phospho-D-ribosyl)glycinamide: step 1/2. Part of the phosphoribosylformylglycinamidine synthase complex involved in the purines biosynthetic pathway. Catalyzes the ATP-dependent conversion of formylglycinamide ribonucleotide (FGAR) and glutamine to yield formylglycinamidine ribonucleotide (FGAM) and glutamate. The FGAM synthase complex is composed of three subunits. PurQ produces an ammonia molecule by converting glutamine to glutamate. PurL transfers the ammonia molecule to FGAR to form FGAM in an ATP-dependent manner. PurS interacts with PurQ and PurL and is thought to assist in the transfer of the ammonia molecule from PurQ to PurL. This chain is Phosphoribosylformylglycinamidine synthase subunit PurQ, found in Rhodopseudomonas palustris (strain ATCC BAA-98 / CGA009).